We begin with the raw amino-acid sequence, 372 residues long: Protein-glutamate methylesterase/protein-glutamine glutaminase 1 (372 aa).

The Response regulatory domain maps to 4–121 (KVLVVDDSSF…ATNKDDAILL (118 aa)). At Asp55 the chain carries 4-aspartylphosphate. The interval 138-174 (VVRPTTPTPPPRSSASSVLGGVSTHTQPAPVRSSHAA) is disordered. Positions 179–372 (SGKQYKLLLI…ESILKESARG (194 aa)) constitute a CheB-type methylesterase domain. Catalysis depends on residues Ser191, His218, and Asp314.

Belongs to the CheB family. In terms of processing, phosphorylated by CheA. Phosphorylation of the N-terminal regulatory domain activates the methylesterase activity.

It is found in the cytoplasm. The catalysed reaction is [protein]-L-glutamate 5-O-methyl ester + H2O = L-glutamyl-[protein] + methanol + H(+). It catalyses the reaction L-glutaminyl-[protein] + H2O = L-glutamyl-[protein] + NH4(+). Functionally, involved in chemotaxis. Part of a chemotaxis signal transduction system that modulates chemotaxis in response to various stimuli. Catalyzes the demethylation of specific methylglutamate residues introduced into the chemoreceptors (methyl-accepting chemotaxis proteins or MCP) by CheR. Also mediates the irreversible deamidation of specific glutamine residues to glutamic acid. This chain is Protein-glutamate methylesterase/protein-glutamine glutaminase 1, found in Shewanella sp. (strain MR-4).